A 79-amino-acid polypeptide reads, in one-letter code: ATP synthase subunit beta (79 aa).

This sequence belongs to the ATPase alpha/beta chains family. F-type ATPases have 2 components, CF(1) - the catalytic core - and CF(0) - the membrane proton channel. CF(1) has five subunits: alpha(3), beta(3), gamma(1), delta(1), epsilon(1). CF(0) has three main subunits: a(1), b(2) and c(9-12). The alpha and beta chains form an alternating ring which encloses part of the gamma chain. CF(1) is attached to CF(0) by a central stalk formed by the gamma and epsilon chains, while a peripheral stalk is formed by the delta and b chains.

The protein localises to the cell membrane. It catalyses the reaction ATP + H2O + 4 H(+)(in) = ADP + phosphate + 5 H(+)(out). Its function is as follows. Produces ATP from ADP in the presence of a proton gradient across the membrane. The catalytic sites are hosted primarily by the beta subunits. The chain is ATP synthase subunit beta (atpD) from Streptococcus downei (Streptococcus sobrinus).